The primary structure comprises 429 residues: Histidine--tRNA ligase (429 aa).

Belongs to the class-II aminoacyl-tRNA synthetase family. In terms of assembly, homodimer.

It localises to the cytoplasm. It carries out the reaction tRNA(His) + L-histidine + ATP = L-histidyl-tRNA(His) + AMP + diphosphate + H(+). In Streptococcus pneumoniae serotype 4 (strain ATCC BAA-334 / TIGR4), this protein is Histidine--tRNA ligase.